A 120-amino-acid polypeptide reads, in one-letter code: Immunogenic miracidial antigen 5D (120 aa).

Positions 41–120 are disordered; it reads HIDVGDEDYH…PKKYGSGYKH (80 aa). The segment covering 45–66 has biased composition (acidic residues); sequence GDEDYHDGDDDVDYTDDVDDVD.

Belongs to the immunogenic miracidial antigen family.

This is Immunogenic miracidial antigen 5D (5D) from Schistosoma japonicum (Blood fluke).